The chain runs to 203 residues: ATP-dependent Clp protease proteolytic subunit 2 (203 aa).

Serine 98 acts as the Nucleophile in catalysis. Histidine 123 is a catalytic residue.

This sequence belongs to the peptidase S14 family. As to quaternary structure, fourteen ClpP subunits assemble into 2 heptameric rings which stack back to back to give a disk-like structure with a central cavity, resembling the structure of eukaryotic proteasomes.

It is found in the cytoplasm. It carries out the reaction Hydrolysis of proteins to small peptides in the presence of ATP and magnesium. alpha-casein is the usual test substrate. In the absence of ATP, only oligopeptides shorter than five residues are hydrolyzed (such as succinyl-Leu-Tyr-|-NHMec, and Leu-Tyr-Leu-|-Tyr-Trp, in which cleavage of the -Tyr-|-Leu- and -Tyr-|-Trp bonds also occurs).. In terms of biological role, cleaves peptides in various proteins in a process that requires ATP hydrolysis. Has a chymotrypsin-like activity. Plays a major role in the degradation of misfolded proteins. The chain is ATP-dependent Clp protease proteolytic subunit 2 from Chlamydia trachomatis serovar A (strain ATCC VR-571B / DSM 19440 / HAR-13).